Here is a 496-residue protein sequence, read N- to C-terminus: Beta-amylase (496 aa).

Substrate contacts are provided by Asp-54, His-94, and Asp-102. Glu-187 (proton donor) is an active-site residue. Substrate contacts are provided by Lys-296, His-301, and Thr-343. Glu-381 functions as the Proton acceptor in the catalytic mechanism. Residues 382–383 (NA) and Arg-421 each bind substrate.

The protein belongs to the glycosyl hydrolase 14 family.

It catalyses the reaction Hydrolysis of (1-&gt;4)-alpha-D-glucosidic linkages in polysaccharides so as to remove successive maltose units from the non-reducing ends of the chains.. The protein is Beta-amylase (BMY1) of Trifolium repens (Creeping white clover).